The chain runs to 145 residues: Large ribosomal subunit protein uL11 (145 aa).

It belongs to the universal ribosomal protein uL11 family. As to quaternary structure, part of the ribosomal stalk of the 50S ribosomal subunit. Interacts with L10 and the large rRNA to form the base of the stalk. L10 forms an elongated spine to which L12 dimers bind in a sequential fashion forming a multimeric L10(L12)X complex. Post-translationally, one or more lysine residues are methylated.

Its function is as follows. Forms part of the ribosomal stalk which helps the ribosome interact with GTP-bound translation factors. The protein is Large ribosomal subunit protein uL11 of Rickettsia peacockii (strain Rustic).